Consider the following 446-residue polypeptide: Putative ZDHHC-type palmitoyltransferase 2 (446 aa).

2 disordered regions span residues 1-33 (MNLYNNSNSSGSSNSSSSSNNKTNIDYNDINNN) and 56-83 (QIINKNNNNNHNRNNNNNNNNNNNHNNP). 4 N-linked (GlcNAc...) asparagine glycosylation sites follow: Asn-5, Asn-8, Asn-14, and Asn-21. The segment covering 56 to 81 (QIINKNNNNNHNRNNNNNNNNNNNHN) has biased composition (low complexity). N-linked (GlcNAc...) asparagine glycans are attached at residues Asn-141, Asn-145, Asn-159, and Asn-165. 5 consecutive transmembrane segments (helical) span residues 178 to 198 (IVIFLILVPYIYILNFAIFPW), 210 to 230 (IHSFISMALVIQMLCNYYLCS), 305 to 325 (YFVLFLFYTSISIIYFFTLLI), 349 to 369 (LFLLGILIIILIIAGISIMAL), and 410 to 430 (IISNFSIVFGNLSFLWLLPTI). The region spanning 261 to 311 (KWCNKCNHQKPERAHHCRYCNRCVLRMDHHCQWLQNCIGLFNQKYFVLFLF) is the DHHC domain.

The protein belongs to the DHHC palmitoyltransferase family.

The protein localises to the membrane. It catalyses the reaction L-cysteinyl-[protein] + hexadecanoyl-CoA = S-hexadecanoyl-L-cysteinyl-[protein] + CoA. This Dictyostelium discoideum (Social amoeba) protein is Putative ZDHHC-type palmitoyltransferase 2.